The chain runs to 779 residues: Phosphoribosylformylglycinamidine synthase subunit PurL (779 aa).

H52 is a catalytic residue. Y55 and K94 together coordinate ATP. A Mg(2+)-binding site is contributed by E96. Residues 97-100 (SHNH) and R119 contribute to the substrate site. Residue H98 is the Proton acceptor of the active site. D120 is a binding site for Mg(2+). Q243 contacts substrate. D271 contacts Mg(2+). Position 315-317 (315-317 (ESQ)) interacts with substrate. Residues N523 and G560 each coordinate ATP. Mg(2+) is bound at residue N561. S563 lines the substrate pocket.

The protein belongs to the FGAMS family. In terms of assembly, monomer. Part of the FGAM synthase complex composed of 1 PurL, 1 PurQ and 2 PurS subunits.

The protein resides in the cytoplasm. The catalysed reaction is N(2)-formyl-N(1)-(5-phospho-beta-D-ribosyl)glycinamide + L-glutamine + ATP + H2O = 2-formamido-N(1)-(5-O-phospho-beta-D-ribosyl)acetamidine + L-glutamate + ADP + phosphate + H(+). Its pathway is purine metabolism; IMP biosynthesis via de novo pathway; 5-amino-1-(5-phospho-D-ribosyl)imidazole from N(2)-formyl-N(1)-(5-phospho-D-ribosyl)glycinamide: step 1/2. Its function is as follows. Part of the phosphoribosylformylglycinamidine synthase complex involved in the purines biosynthetic pathway. Catalyzes the ATP-dependent conversion of formylglycinamide ribonucleotide (FGAR) and glutamine to yield formylglycinamidine ribonucleotide (FGAM) and glutamate. The FGAM synthase complex is composed of three subunits. PurQ produces an ammonia molecule by converting glutamine to glutamate. PurL transfers the ammonia molecule to FGAR to form FGAM in an ATP-dependent manner. PurS interacts with PurQ and PurL and is thought to assist in the transfer of the ammonia molecule from PurQ to PurL. The protein is Phosphoribosylformylglycinamidine synthase subunit PurL of Prochlorococcus marinus (strain MIT 9515).